The chain runs to 466 residues: MADFSDFHVADIALAGWGRKELNIAETEMPGLMATRDEYHAAQPLRGARIAGSLHMTVQTAVLIETLTALGAEVRWASCNIFSTQDHAAAAIAAAGIPVFAFKGESLDEYWEFSHKIFEWPEGQPANMILDDGGDATLLLMLGSKAEKDIGVIAHPTNEEETALFASIKRHLAIDPHWYSKRLEHIQGVTEETTTGVHRLYQLEKDGHLPFPAINVNDSVTKSKFDNLYGCRESLVDGIKRATDVMVAGKVAVVLGYGDVGKGCAQSLRGLGATVWVTEIDPICALQAAMEGYRVVRMDEVADQADIFVTATGNVGVITHEHMKKMRNNAIICNIGHFDSEIEVASLRQYQWENIKPQVDHIIFPDGKRVILLAEGRLVNLGCATGHPSFVMSNSFTNQVLAQIELFANGHKYEKKVYVLPKHLDEKVARLHLARIGARLTELSDQQAAYISVPKQGPYKPDHYRY.

The substrate site is built by Thr57, Asp132, and Glu192. 193 to 195 (TTT) serves as a coordination point for NAD(+). Positions 222 and 226 each coordinate substrate. NAD(+)-binding positions include Asn227, 256–261 (GYGDVG), Glu279, Asn314, 335–337 (IGH), and Asn380.

Belongs to the adenosylhomocysteinase family. Requires NAD(+) as cofactor.

The protein localises to the cytoplasm. It carries out the reaction S-adenosyl-L-homocysteine + H2O = L-homocysteine + adenosine. Its pathway is amino-acid biosynthesis; L-homocysteine biosynthesis; L-homocysteine from S-adenosyl-L-homocysteine: step 1/1. In terms of biological role, may play a key role in the regulation of the intracellular concentration of adenosylhomocysteine. The protein is Adenosylhomocysteinase of Chromobacterium violaceum (strain ATCC 12472 / DSM 30191 / JCM 1249 / CCUG 213 / NBRC 12614 / NCIMB 9131 / NCTC 9757 / MK).